The following is a 358-amino-acid chain: 3-O-methylredipecamine 2-O-methyltransferase IpeOMT3 (358 aa).

S-adenosyl-L-methionine-binding residues include Gly193, Asp216, Asp236, Met237, and Lys250. His254 acts as the Proton acceptor in catalysis.

The protein belongs to the class I-like SAM-binding methyltransferase superfamily. Cation-independent O-methyltransferase family. As to expression, expressed in roots.

It is found in the cytoplasm. The protein localises to the cytosol. It catalyses the reaction (S)-reticuline + S-adenosyl-L-methionine = (S)-laudanine + S-adenosyl-L-homocysteine + H(+). It functions in the pathway alkaloid biosynthesis. Functionally, O-methyltransferase involved in the biosynthesis of ipecac and benzylisoquinoline monoterpenoid-isoquinoline alkaloids natural products, starting by the condensation of dopamine and secologanin, and including emetine and cephaeline, drugs used both as anti-protozoal (e.g. treatment of ameobiasis) and as emetic agents. Catalyzes 2-O-methylation of 3-O-methylredipecamine and, with less efficiency, the 7-O-methylation of (S)-coclaurine, (R,S)-N-methylcoclaurine, (R,S)-4'-O-methylcoclaurine, (R,S)-6-O-methyllaudanosoline, nororientaline, (S)-norreticuline and (S)-reticuline. The protein is 3-O-methylredipecamine 2-O-methyltransferase IpeOMT3 of Carapichea ipecacuanha (Ipecac).